Here is a 168-residue protein sequence, read N- to C-terminus: G/U mismatch-specific DNA glycosylase (168 aa).

Belongs to the uracil-DNA glycosylase (UDG) superfamily. TDG/mug family. In terms of assembly, binds DNA as a monomer.

It is found in the cytoplasm. It carries out the reaction Specifically hydrolyzes mismatched double-stranded DNA and polynucleotides, releasing free uracil.. Its function is as follows. Excises ethenocytosine and uracil, which can arise by alkylation or deamination of cytosine, respectively, from the corresponding mispairs with guanine in ds-DNA. It is capable of hydrolyzing the carbon-nitrogen bond between the sugar-phosphate backbone of the DNA and the mispaired base. The complementary strand guanine functions in substrate recognition. Required for DNA damage lesion repair in stationary-phase cells. This chain is G/U mismatch-specific DNA glycosylase, found in Salmonella choleraesuis (strain SC-B67).